The following is a 603-amino-acid chain: Sulfoacetaldehyde acetyltransferase (603 aa).

The protein belongs to the TPP enzyme family. Mg(2+) is required as a cofactor. Requires thiamine diphosphate as cofactor.

The enzyme catalyses acetyl phosphate + sulfite + H(+) = sulfoacetaldehyde + phosphate. In terms of biological role, catalyzes the degradation of sulfoacetaldehyde into sulfite and acetyl phosphate. Involved in sulfolactate degradation. The polypeptide is Sulfoacetaldehyde acetyltransferase (Roseovarius nubinhibens (strain ATCC BAA-591 / DSM 15170 / ISM)).